The sequence spans 375 residues: G-protein coupled estrogen receptor 1 (375 aa).

At methionine 1 the chain carries N-acetylmethionine. Residues methionine 1 to serine 62 lie on the Extracellular side of the membrane. N-linked (GlcNAc...) asparagine glycans are attached at residues asparagine 32 and asparagine 44. The helical transmembrane segment at cysteine 63–asparagine 84 threads the bilayer. Over isoleucine 85–leucine 96 the chain is Cytoplasmic. A helical transmembrane segment spans residues tyrosine 97–aspartate 120. Over glutamate 121–phenylalanine 132 the chain is Extracellular. Residues cysteine 130 and cysteine 207 are joined by a disulfide bond. A helical membrane pass occupies residues methionine 133–phenylalanine 153. Topologically, residues aspartate 154–arginine 175 are cytoplasmic. The helical transmembrane segment at leucine 176–threonine 194 threads the bilayer. Residues alanine 195–threonine 220 lie on the Extracellular side of the membrane. A helical transmembrane segment spans residues leucine 221 to leucine 236. At isoleucine 237–arginine 259 the chain is on the cytoplasmic side. Residues methionine 260–serine 280 form a helical membrane-spanning segment. The Extracellular portion of the chain corresponds to valine 281 to glycine 306. Residues histidine 307–leucine 327 traverse the membrane as a helical segment. Topologically, residues glycine 328 to valine 375 are cytoplasmic.

Belongs to the G-protein coupled receptor 1 family. As to quaternary structure, homodimer. Heterodimer; heterodimerizes with other G-protein-coupled receptor (GPCRs) like CRHR1, HTR1A and PAQR8. Interacts with RAMP3; the interaction confers proper subcellular localization and function in cardioprotection. Interacts with KRT7 and KRT8. Interacts with EGFR; the interaction increases after agonist-induced stimulation in cancer-associated fibroblasts (CAF). Interacts with EGFR and ESR1. Interacts (via C-terminus tail motif) with DLG4 (via N-terminus tandem pair of PDZ domains); the interaction is direct and induces the increase of GPER1 protein levels residing at the plasma membrane surface in a estradiol-independent manner. In terms of processing, ubiquitinated; ubiquitination occurs at the plasma membrane and leads to proteasome-mediated degradation. Glycosylated. Expressed in the brain. Expressed in neurons of the hippocampus, hypothalamic paraventricular nucleus (PVN), supraoptic nucleus (SON) and the median eminence. Expressed in magnocellular neurosecretory cells (MNCs) which secrete oxytocin but not in MNCs which secrete vasopressin. Expressed in glial cells. Expressed in the nucleus ambiguous. Expressed in epithelial cells, in pachytene spermatocytes (PS) (at protein level). Expressed strongly in vascular endothelial cells and poorly in vascular smooth muscle cells (VSMC). Expressed in the brain, lung, pituitary gland, adrenal medulla, renal pelvis and ovary. Expressed in CA1 hippocampus. Expressed weakly in heart, skeletal muscle and kidney.

The protein localises to the nucleus. Its subcellular location is the cytoplasm. The protein resides in the perinuclear region. It is found in the cytoskeleton. It localises to the cytoplasmic vesicle membrane. The protein localises to the cell membrane. Its subcellular location is the basolateral cell membrane. The protein resides in the endoplasmic reticulum membrane. It is found in the early endosome. It localises to the recycling endosome. The protein localises to the golgi apparatus. Its subcellular location is the trans-Golgi network. The protein resides in the golgi apparatus membrane. It is found in the cell projection. It localises to the dendrite. The protein localises to the dendritic spine membrane. Its subcellular location is the axon. The protein resides in the postsynaptic density. It is found in the mitochondrion membrane. G-protein coupled estrogen receptor that binds to 17-beta-estradiol (E2) with high affinity, leading to rapid and transient activation of numerous intracellular signaling pathways. Stimulates cAMP production, calcium mobilization and tyrosine kinase Src inducing the release of heparin-bound epidermal growth factor (HB-EGF) and subsequent transactivation of the epidermal growth factor receptor (EGFR), activating downstream signaling pathways such as PI3K/Akt and ERK/MAPK. Mediates pleiotropic functions among others in the cardiovascular, endocrine, reproductive, immune and central nervous systems. Has a role in cardioprotection by reducing cardiac hypertrophy and perivascular fibrosis in a RAMP3-dependent manner. Regulates arterial blood pressure by stimulating vasodilation and reducing vascular smooth muscle and microvascular endothelial cell proliferation. Plays a role in blood glucose homeostasis contributing to the insulin secretion response by pancreatic beta cells. Triggers mitochondrial apoptosis during pachytene spermatocyte differentiation. Stimulates uterine epithelial cell proliferation. Enhances uterine contractility in response to oxytocin. Contributes to thymic atrophy by inducing apoptosis. Attenuates TNF-mediated endothelial expression of leukocyte adhesion molecules. Promotes neuritogenesis in developing hippocampal neurons. Plays a role in acute neuroprotection against NMDA-induced excitotoxic neuronal death. Increases firing activity and intracellular calcium oscillations in luteinizing hormone-releasing hormone (LHRH) neurons. Inhibits early osteoblast proliferation at growth plate during skeletal development. Inhibits mature adipocyte differentiation and lipid accumulation. Involved in the recruitment of beta-arrestin 2 ARRB2 at the plasma membrane in epithelial cells. Also functions as a receptor for aldosterone mediating rapid regulation of vascular contractibility through the PI3K/ERK signaling pathway. Involved in cancer progression regulation. Stimulates cancer-associated fibroblast (CAF) proliferation by a rapid genomic response through the EGFR/ERK transduction pathway. Associated with EGFR, may act as a transcription factor activating growth regulatory genes (c-fos, cyclin D1). Promotes integrin alpha-5/beta-1 and fibronectin (FN) matrix assembly in breast cancer cells. The chain is G-protein coupled estrogen receptor 1 (Gper1) from Rattus norvegicus (Rat).